A 248-amino-acid chain; its full sequence is DNA repair protein RecO (248 aa).

This sequence belongs to the RecO family.

Its function is as follows. Involved in DNA repair and RecF pathway recombination. The polypeptide is DNA repair protein RecO (Streptomyces griseus subsp. griseus (strain JCM 4626 / CBS 651.72 / NBRC 13350 / KCC S-0626 / ISP 5235)).